Consider the following 161-residue polypeptide: RNA pyrophosphohydrolase (161 aa).

Residues 9–155 (PYRPCVGVML…KRRVYRQVVD (147 aa)) form the Nudix hydrolase domain. The Nudix box motif lies at 44–65 (GGIDDGEELHPAALRELSEETG).

Belongs to the Nudix hydrolase family. RppH subfamily. Requires a divalent metal cation as cofactor.

Its function is as follows. Accelerates the degradation of transcripts by removing pyrophosphate from the 5'-end of triphosphorylated RNA, leading to a more labile monophosphorylated state that can stimulate subsequent ribonuclease cleavage. The protein is RNA pyrophosphohydrolase of Novosphingobium aromaticivorans (strain ATCC 700278 / DSM 12444 / CCUG 56034 / CIP 105152 / NBRC 16084 / F199).